Here is a 220-residue protein sequence, read N- to C-terminus: Probable septum site-determining protein MinC (220 aa).

The protein belongs to the MinC family. As to quaternary structure, interacts with MinD and FtsZ.

In terms of biological role, cell division inhibitor that blocks the formation of polar Z ring septums. Rapidly oscillates between the poles of the cell to destabilize FtsZ filaments that have formed before they mature into polar Z rings. Prevents FtsZ polymerization. The sequence is that of Probable septum site-determining protein MinC from Photobacterium profundum (strain SS9).